We begin with the raw amino-acid sequence, 366 residues long: 3-dehydroquinate synthase (366 aa).

NAD(+)-binding positions include 71 to 76 (DGEKYK), 105 to 109 (GVIGD), 129 to 130 (TT), lysine 142, lysine 151, and 169 to 172 (TLQT). Glutamate 184, histidine 247, and histidine 264 together coordinate Zn(2+).

Belongs to the sugar phosphate cyclases superfamily. Dehydroquinate synthase family. Requires Co(2+) as cofactor. Zn(2+) serves as cofactor. The cofactor is NAD(+).

It is found in the cytoplasm. It catalyses the reaction 7-phospho-2-dehydro-3-deoxy-D-arabino-heptonate = 3-dehydroquinate + phosphate. Its pathway is metabolic intermediate biosynthesis; chorismate biosynthesis; chorismate from D-erythrose 4-phosphate and phosphoenolpyruvate: step 2/7. Its function is as follows. Catalyzes the conversion of 3-deoxy-D-arabino-heptulosonate 7-phosphate (DAHP) to dehydroquinate (DHQ). The sequence is that of 3-dehydroquinate synthase from Actinobacillus pleuropneumoniae serotype 5b (strain L20).